Reading from the N-terminus, the 445-residue chain is tRNA(Ile)-lysidine synthase (445 aa).

38 to 43 serves as a coordination point for ATP; that stretch reads SGGLDS.

It belongs to the tRNA(Ile)-lysidine synthase family.

The protein resides in the cytoplasm. It carries out the reaction cytidine(34) in tRNA(Ile2) + L-lysine + ATP = lysidine(34) in tRNA(Ile2) + AMP + diphosphate + H(+). In terms of biological role, ligates lysine onto the cytidine present at position 34 of the AUA codon-specific tRNA(Ile) that contains the anticodon CAU, in an ATP-dependent manner. Cytidine is converted to lysidine, thus changing the amino acid specificity of the tRNA from methionine to isoleucine. The polypeptide is tRNA(Ile)-lysidine synthase (Neisseria gonorrhoeae (strain ATCC 700825 / FA 1090)).